A 168-amino-acid chain; its full sequence is MRMTFLSYLKQWRGTAKEAFENVSIVAKFLCLLHVTDRYIISTTHVHGPSMLPTLNLTGDVILAEHLSHRFGKIGLGDVVLVRSPRDPKRMVTKRILGLEGDRLTFSADPLVGDASVSVLVPKGHVWIQGDNLYASTDSRHFGPVPYSLIEGKALLRVWPPEYFGSLR.

Residues 1–47 (MRMTFLSYLKQWRGTAKEAFENVSIVAKFLCLLHVTDRYIISTTHVH) constitute a mitochondrion transit peptide. Active-site residues include S50 and K94.

The protein belongs to the peptidase S26 family. IMP1 subfamily. In terms of assembly, heterodimer of 2 subunits, IMP1A/B and IMP12.

It is found in the mitochondrion inner membrane. Its function is as follows. Catalyzes the removal of transit peptides required for the targeting of proteins from the mitochondrial matrix, across the inner membrane, into the inter-membrane space. The sequence is that of Mitochondrial ATP-independent inner membrane protease subunit 1a from Arabidopsis thaliana (Mouse-ear cress).